A 134-amino-acid polypeptide reads, in one-letter code: Probable glycine cleavage system H protein (134 aa).

The Lipoyl-binding domain occupies 29 to 110 (TVLVGITDYA…PYGAWIAKIK (82 aa)). An N6-lipoyllysine modification is found at Lys-70.

It belongs to the GcvH family. As to quaternary structure, the glycine cleavage system is composed of four proteins: P, T, L and H. It depends on (R)-lipoate as a cofactor.

Functionally, the glycine cleavage system catalyzes the degradation of glycine. The H protein shuttles the methylamine group of glycine from the P protein to the T protein. In Pyrococcus horikoshii (strain ATCC 700860 / DSM 12428 / JCM 9974 / NBRC 100139 / OT-3), this protein is Probable glycine cleavage system H protein.